The chain runs to 261 residues: tRNA U34 carboxymethyltransferase (261 aa).

Carboxy-S-adenosyl-L-methionine contacts are provided by residues Lys-25, Trp-39, Lys-44, Gly-63, 114 to 115 (VE), Tyr-135, and Arg-250.

It belongs to the class I-like SAM-binding methyltransferase superfamily. CmoB family. As to quaternary structure, homotetramer.

The enzyme catalyses carboxy-S-adenosyl-L-methionine + 5-hydroxyuridine(34) in tRNA = 5-carboxymethoxyuridine(34) in tRNA + S-adenosyl-L-homocysteine + H(+). In terms of biological role, catalyzes carboxymethyl transfer from carboxy-S-adenosyl-L-methionine (Cx-SAM) to 5-hydroxyuridine (ho5U) to form 5-carboxymethoxyuridine (cmo5U) at position 34 in tRNAs. The chain is tRNA U34 carboxymethyltransferase from Helicobacter pylori (strain Shi470).